The following is a 366-amino-acid chain: tRNA/tmRNA (uracil-C(5))-methyltransferase (366 aa).

S-adenosyl-L-methionine contacts are provided by Q190, Y218, N223, E239, and D299. The active-site Nucleophile is the C324. E358 serves as the catalytic Proton acceptor.

This sequence belongs to the class I-like SAM-binding methyltransferase superfamily. RNA M5U methyltransferase family. TrmA subfamily.

It catalyses the reaction uridine(54) in tRNA + S-adenosyl-L-methionine = 5-methyluridine(54) in tRNA + S-adenosyl-L-homocysteine + H(+). The enzyme catalyses uridine(341) in tmRNA + S-adenosyl-L-methionine = 5-methyluridine(341) in tmRNA + S-adenosyl-L-homocysteine + H(+). Its function is as follows. Dual-specificity methyltransferase that catalyzes the formation of 5-methyluridine at position 54 (m5U54) in all tRNAs, and that of position 341 (m5U341) in tmRNA (transfer-mRNA). In Salmonella newport (strain SL254), this protein is tRNA/tmRNA (uracil-C(5))-methyltransferase.